The sequence spans 111 residues: UPF0060 membrane protein CPR_1507 (111 aa).

The next 4 helical transmembrane spans lie at 7 to 27, 33 to 53, 60 to 80, and 85 to 105; these read IFYF…IWLW, SLIY…IPTL, FGRV…LCGW, and IIPD…VLII.

This sequence belongs to the UPF0060 family.

It is found in the cell membrane. The sequence is that of UPF0060 membrane protein CPR_1507 from Clostridium perfringens (strain SM101 / Type A).